Here is a 702-residue protein sequence, read N- to C-terminus: Cytolytic toxin-alpha (702 aa).

Positions 2 to 265 (SSDIIMAGLG…KADLLVRDIS (264 aa)) are structural MACPF/CDC pore-forming domain. N-linked (GlcNAc...) asparagine glycosylation is found at Asn93, Asn100, Asn201, Asn287, and Asn311. The tract at residues 266-385 (QGLVRKVHSI…DIIEETKHKA (120 aa)) is structural FAT domain. The segment at 386–513 (VLSQSQMVKD…PIISAVEKIV (128 aa)) is thioredoxin (THX) domain. The B30.2/SPRY domain occupies 505 to 702 (IISAVEKIVD…RPYHGTVRLL (198 aa)). An N-linked (GlcNAc...) asparagine glycan is attached at Asn530.

Belongs to the SNTX/VTX toxin family. In terms of assembly, heterodimer of alpha and beta subunits; non-covalently linked. Also associates into tetramers or even higher aggregates. Intrachain disulfide bonds may be present in the heterodimer. As to expression, expressed by the venom gland.

The protein localises to the secreted. This heterodimer induces potent hemolytic activities (when tested on rabbit erythrocytes, EC(50)=25-56 ng/mL) due to its ability to form pores in the cell membrane. The pore may be composed of 10 alpha/beta heterodimers. The toxin shows cardiovascular effects that include a vasorelaxant action that may involve the L-arginine-nitric oxid synthase pathway. In addition, it displays edema-inducing activities, increases vascular permeability. It also shows myotoxic activities and interferes irreversibly with neuromuscular function. It also induces irreversible platelet aggregation in rabbit or rat (but not in human or mouse) whole blood. In addition, it has been observed to increase spontaneous quantal acetylcholine release from isolated frog cutaneous pectoris motor endings. This is Cytolytic toxin-alpha from Scorpaena plumieri (Spotted scorpionfish).